Consider the following 677-residue polypeptide: Vertnin (677 aa).

2 disordered regions span residues 356 to 376 and 458 to 490; these read GSTG…SSPE and HSGS…KLSP. Basic and acidic residues predominate over residues 458-472; the sequence is HSGSSEEGSDADKSQ.

It belongs to the vertnin family.

It localises to the nucleus. Functions as a transcriptional repressor that modulates bmp2b expression during dorsoventral patterning. In Danio rerio (Zebrafish), this protein is Vertnin (vrtn).